Here is a 51-residue protein sequence, read N- to C-terminus: uncharacterized protein (51 aa).

This is an uncharacterized protein from Escherichia coli (strain K12).